A 715-amino-acid polypeptide reads, in one-letter code: Patatin-like phospholipase domain-containing protein ATEG_02594 (715 aa).

A helical transmembrane segment spans residues 84 to 104; the sequence is WPFLAFVLGWISFLGVAYILT. In terms of domain architecture, PNPLA spans 274-465; sequence LCLSGGATFA…RTDIPIKALN (192 aa). The GXSXG signature appears at 305–309; that stretch reads GTSGG. Serine 307 acts as the Nucleophile in catalysis. Aspartate 452 (proton acceptor) is an active-site residue. The segment at 613-715 is disordered; the sequence is TAPRGGGRAT…DVDSDTWKGQ (103 aa). A compositionally biased stretch (basic and acidic residues) spans 652 to 661; the sequence is RTGEYSKEAD. Residues 665–678 are compositionally biased toward polar residues; the sequence is AEMSDSSGVDSATA.

This sequence belongs to the PLPL family.

Its subcellular location is the membrane. Probable lipid hydrolase. The sequence is that of Patatin-like phospholipase domain-containing protein ATEG_02594 from Aspergillus terreus (strain NIH 2624 / FGSC A1156).